We begin with the raw amino-acid sequence, 270 residues long: HTH-type transcriptional repressor DrrR1 (270 aa).

Residues 1-11 (MESGTSRTSDT) are compositionally biased toward low complexity. The interval 1–28 (MESGTSRTSDTGGTGRAGSTETSGSGDI) is disordered. Positions 49 to 109 (TLTLDRVVEA…LMLDRVQRPS (61 aa)) constitute an HTH tetR-type domain. The H-T-H motif DNA-binding region spans 72 to 91 (SMRRVAAELGTGTMSLYRYV).

The protein localises to the cytoplasm. Daunorubicin and doxorubicin can induce dissociation of DrrR1 from its DNA complex. Ampicillin cannot release DrrR1 from the DNA complex at the same concentrations. Transcriptional regulator that modulates the expression of the drrA2-drrB2 genes, which encode an ABC transporter involved in daunorubicin efflux, in response to intracellular daunorubicin/doxorubicin accumulation. In the absence of daunorubicin or doxorubicin, binds directly to the drrA2-drrB2 promoter region and negatively regulates expression of the genes. In the presence of daunorubicin or doxorubicin, DrrR1 dissociates from DNA, leading to the transcription of the genes. This is HTH-type transcriptional repressor DrrR1 from Streptomyces coeruleorubidus.